The primary structure comprises 208 residues: Small ribosomal subunit protein uS4 (208 aa).

In terms of domain architecture, S4 RNA-binding spans 98–158 (GRLDNVVYRM…EKSKKQARIK (61 aa)).

Belongs to the universal ribosomal protein uS4 family. Part of the 30S ribosomal subunit. Contacts protein S5. The interaction surface between S4 and S5 is involved in control of translational fidelity.

Functionally, one of the primary rRNA binding proteins, it binds directly to 16S rRNA where it nucleates assembly of the body of the 30S subunit. With S5 and S12 plays an important role in translational accuracy. The protein is Small ribosomal subunit protein uS4 of Haemophilus ducreyi (strain 35000HP / ATCC 700724).